A 44-amino-acid polypeptide reads, in one-letter code: Poly-ADP-ribosylation-amplifying and CtIP-maintaining micropeptide (44 aa).

Residues 1 to 44 (MAASGGTKKAQSGGRRLREPSSRPSRRARQRPRRGALRKAGRFL) are disordered. A compositionally biased stretch (basic residues) spans 24–44 (PSRRARQRPRRGALRKAGRFL).

In terms of assembly, interacts with KLHL15; preventing ubiquitination and degradation of RBBP8/CtIP. Interacts with PARP1.

It is found in the nucleus. It localises to the nucleolus. Its subcellular location is the chromosome. Micropeptide that acts as a regulator of DNA repair both by preventing KLHL15-mediated ubiquitination and degradation of RBBP8/CtIP, and by promoting the poly-ADP-ribosyltransferase activity of PARP1. Prevents KLHL15-mediated ubiquitination of RBBP8/CtIP by competitively blocking the association between KLHL15 and RBBP8/CtIP. Recruited to DNA damage sites via association with poly-ADP-ribose chains, and enhances the poly-ADP-ribosyltransferase activity of PARP1. The sequence is that of Poly-ADP-ribosylation-amplifying and CtIP-maintaining micropeptide from Homo sapiens (Human).